Consider the following 415-residue polypeptide: Thylakoid ADP,ATP carrier protein, chloroplastic (415 aa).

Residues 1–61 (MGEEKSLLQF…NFASLSVAIR (61 aa)) constitute a chloroplast transit peptide. 5 consecutive transmembrane segments (helical) span residues 106–126 (IALLSIVPKDAALFFAGAFAG), 182–207 (LPQVIRIVPYSAVQLFAYETYKKLFR), 219–239 (LGAGACAGMTSTLITYPLDVL), 273–293 (GPSLLSIAPYIAINFCVFDLV), and 309–329 (LLTAVVAAAIATGTCYPLDTI). 3 Solcar repeats span residues 113 to 205 (PKDA…YKKL), 213 to 296 (LSVL…VKKS), and 307 to 387 (SSLL…VKKL). R187 serves as a coordination point for ADP. R330 contributes to the ADP binding site. A helical transmembrane segment spans residues 362–388 (GFVPNALKSMPNSSIKLTTFDIVKKLI).

It belongs to the mitochondrial carrier (TC 2.A.29) family. Highly expressed in developing photosynthetic organs such as leaves, flower buds and green siliques. Also detected in roots, flowers, mature leaves and stems.

It localises to the plastid. It is found in the chloroplast thylakoid membrane. The protein localises to the chloroplast envelope. KM and Vmax values toward ATP only are increased by m-chlorocarbonyl cyanide phenylhydrazone (CCCP). The corresponding values for ADP are not affected. Functionally, specifically transports adenine nucleotides. Involved in the uptake of ATP into thylakoids in exchange for lumenal ADP. The chain is Thylakoid ADP,ATP carrier protein, chloroplastic (TAAC) from Arabidopsis thaliana (Mouse-ear cress).